We begin with the raw amino-acid sequence, 432 residues long: Lipoyl synthase, mitochondrial (432 aa).

Over residues 32–68 (TLGATPGSTSTSTSTSTATTTTLESTSTSTSGDATET) the composition is skewed to low complexity. A disordered region spans residues 32-71 (TLGATPGSTSTSTSTSTATTTTLESTSTSTSGDATETTIK). [4Fe-4S] cluster-binding residues include C150, C155, C161, C180, C184, C187, and S395. The 220-residue stretch at 165 to 384 (KKSEATATIM…RDVALEMGFL (220 aa)) folds into the Radical SAM core domain.

It belongs to the radical SAM superfamily. Lipoyl synthase family. It depends on [4Fe-4S] cluster as a cofactor.

Its subcellular location is the mitochondrion. The enzyme catalyses [[Fe-S] cluster scaffold protein carrying a second [4Fe-4S](2+) cluster] + N(6)-octanoyl-L-lysyl-[protein] + 2 oxidized [2Fe-2S]-[ferredoxin] + 2 S-adenosyl-L-methionine + 4 H(+) = [[Fe-S] cluster scaffold protein] + N(6)-[(R)-dihydrolipoyl]-L-lysyl-[protein] + 4 Fe(3+) + 2 hydrogen sulfide + 2 5'-deoxyadenosine + 2 L-methionine + 2 reduced [2Fe-2S]-[ferredoxin]. Its pathway is protein modification; protein lipoylation via endogenous pathway; protein N(6)-(lipoyl)lysine from octanoyl-[acyl-carrier-protein]: step 2/2. Catalyzes the radical-mediated insertion of two sulfur atoms into the C-6 and C-8 positions of the octanoyl moiety bound to the lipoyl domains of lipoate-dependent enzymes, thereby converting the octanoylated domains into lipoylated derivatives. In Lodderomyces elongisporus (strain ATCC 11503 / CBS 2605 / JCM 1781 / NBRC 1676 / NRRL YB-4239) (Yeast), this protein is Lipoyl synthase, mitochondrial.